We begin with the raw amino-acid sequence, 485 residues long: GlcNAc-binding protein A (485 aa).

A signal peptide spans 1–23; it reads MKKQPKMTAIALILSGISGLAYG. In terms of domain architecture, Chitin-binding type-4 spans 24-201; sequence HGYVSAVENG…SFYNVIDVKF (178 aa). In terms of domain architecture, Chitin-binding type-3 spans 437-478; that stretch reads AGTKVLASDGAIYQCKPWPYSGYCQQWTSNATQYQPGTGSHW.

Belongs to the GbpA family.

The protein localises to the secreted. Its function is as follows. Probably interacts with GlcNAc residues. May promote attachment to both epithelial cell surfaces and chitin. This is GlcNAc-binding protein A from Vibrio cholerae serotype O1 (strain M66-2).